A 484-amino-acid chain; its full sequence is Serine protease HTR4 (484 aa).

A signal peptide spans 1–28; it reads MARPLQRPAGLGPFVLLWLLLPAPSGRG. One can recognise an IGFBP N-terminal domain in the interval 36 to 114; it reads PVPRCPAACE…GRPLGTCGCP (79 aa). 8 disulfide bridges follow: C40–C66, C44–C68, C49–C69, C55–C72, C80–C94, C88–C111, C113–C132, and C121–C157. The Kazal-like domain occupies 105-159; that stretch reads GRPLGTCGCPAAGATVCGSDGRTYRSLCALRAENRAARLRGALPAVPVQKGDCGD. Residues 209–369 are serine protease; sequence ASGFIVSEDG…IPSDRIRQFL (161 aa). Active-site charge relay system residues include H225, D255, and S333. The PDZ domain maps to 390–472; the sequence is LRMLPLTMNL…LSLLVRRKSQ (83 aa).

It belongs to the peptidase S1C family.

The protein resides in the secreted. Serine protease. The polypeptide is Serine protease HTR4 (HTRA4) (Bos taurus (Bovine)).